We begin with the raw amino-acid sequence, 310 residues long: ADP-L-glycero-D-manno-heptose-6-epimerase (310 aa).

NADP(+) contacts are provided by residues 10–11 (FI), 31–32 (DN), Lys38, Lys53, 75–79 (EGACS), and Asn92. Tyr140 acts as the Proton acceptor in catalysis. Lys144 contacts NADP(+). A substrate-binding site is contributed by Asn169. Residues Val170 and Lys178 each contribute to the NADP(+) site. Lys178 serves as the catalytic Proton acceptor. Residues Gly180, His187, 201-204 (FAGS), Arg209, and Tyr272 each bind substrate.

The protein belongs to the NAD(P)-dependent epimerase/dehydratase family. HldD subfamily. In terms of assembly, homopentamer. The cofactor is NADP(+).

The enzyme catalyses ADP-D-glycero-beta-D-manno-heptose = ADP-L-glycero-beta-D-manno-heptose. It participates in nucleotide-sugar biosynthesis; ADP-L-glycero-beta-D-manno-heptose biosynthesis; ADP-L-glycero-beta-D-manno-heptose from D-glycero-beta-D-manno-heptose 7-phosphate: step 4/4. Its function is as follows. Catalyzes the interconversion between ADP-D-glycero-beta-D-manno-heptose and ADP-L-glycero-beta-D-manno-heptose via an epimerization at carbon 6 of the heptose. The chain is ADP-L-glycero-D-manno-heptose-6-epimerase from Sodalis glossinidius (strain morsitans).